We begin with the raw amino-acid sequence, 373 residues long: GTP cyclohydrolase 1 type 2 homolog (373 aa).

5 residues coordinate a divalent metal cation: His67, His68, Asp106, His333, and Glu336.

It belongs to the GTP cyclohydrolase I type 2/NIF3 family. In terms of assembly, homohexamer.

The protein is GTP cyclohydrolase 1 type 2 homolog of Listeria monocytogenes serovar 1/2a (strain ATCC BAA-679 / EGD-e).